The sequence spans 2325 residues: Otogelin-like protein (2325 aa).

The signal sequence occupies residues 1 to 22 (MVPWRALSLPILLVSLRGYVCA). The VWFD 1 domain maps to 112–288 (GICKTWGQYH…VLTPDDTKCV (177 aa)). Disulfide bonds link C114–C248 and C136–C287. N-linked (GlcNAc...) asparagine glycosylation occurs at N425. In terms of domain architecture, VWFD 2 spans 472–645 (VQCSVVGDSH…HAWRVSSTCF (174 aa)). 3 cysteine pairs are disulfide-bonded: C474/C609, C496/C644, and C518/C526. The 56-residue stretch at 736-791 (CQKGMLYHHCSSLCLRSCTSLSSPEQCKDDCAEGCNCPEGKFYEETLNFCVPIYHC) folds into the TIL 1 domain. 2 N-linked (GlcNAc...) asparagine glycosylation sites follow: N817 and N867. Residues 937–1114 (AVCTVYGDRH…DLMEALKPCE (178 aa)) enclose the VWFD 3 domain. Disulfide bonds link C939–C1069, C961–C1113, and C983–C990. A glycan (N-linked (GlcNAc...) asparagine) is linked at N1280. A TIL 2 domain is found at 1366–1418 (RYEPCATPCFKTCSDPEALACTFLPPVEGCLPYCPKNMILDETTLKCVHPEDC). Residues 1506 to 1695 (CRCSMLSELS…SWEIEKSFEV (190 aa)) form the VWFD 4 domain. 2 cysteine pairs are disulfide-bonded: C1508–C1655 and C1549–C1571. N1576 and N2170 each carry an N-linked (GlcNAc...) asparagine glycan. Intrachain disulfides connect C2233-C2289, C2254-C2303, C2265-C2320, and C2269-C2322. Residues 2233-2325 (CKREERICQK…EPIDCTCQWN (93 aa)) enclose the CTCK domain. The N-linked (GlcNAc...) asparagine glycan is linked to N2296.

This sequence belongs to the otogelin family.

The protein localises to the secreted. This Mus musculus (Mouse) protein is Otogelin-like protein (Otogl).